The sequence spans 771 residues: Topoisomerase 1-associated factor 2 (771 aa).

Disordered regions lie at residues 48–69, 271–330, and 346–367; these read NSIN…SIQS, EGVV…ISFD, and SDMH…KSSL. Positions 51-69 are enriched in low complexity; that stretch reads NNCSDPSPTSPSSQNSIQS. The span at 275-294 shows a compositional bias: polar residues; sequence TQGSDNNKENIPSSTQQQKN. Positions 295–307 are enriched in basic and acidic residues; sequence DGAKRAESKDLDL. Positions 346-359 are enriched in polar residues; the sequence is SDMHIQYSNPSSGA. Position 397 is a phosphoserine (Ser397). Thr405 bears the Phosphothreonine mark. The interval 633-771 is disordered; that stretch reads NSKDKVEATS…KYVESDEDDQ (139 aa). Positions 640–652 are enriched in polar residues; the sequence is ATSNSTAQEQEQV. Low complexity predominate over residues 690-709; it reads SHSSPSSSSSMSLESSLDSS.

The protein to yeast YJL076w. In terms of assembly, interacts with HPR1.

It localises to the nucleus. The polypeptide is Topoisomerase 1-associated factor 2 (TOF2) (Saccharomyces cerevisiae (strain ATCC 204508 / S288c) (Baker's yeast)).